Reading from the N-terminus, the 159-residue chain is Phosphopantetheine adenylyltransferase (159 aa).

S8 contributes to the substrate binding site. Residues 8–9 (SF) and H16 contribute to the ATP site. Substrate is bound by residues K40, T72, and R86. ATP is bound by residues 87 to 89 (GLR), E97, and 122 to 128 (HSFVSSS).

This sequence belongs to the bacterial CoaD family. Homohexamer. The cofactor is Mg(2+).

Its subcellular location is the cytoplasm. It catalyses the reaction (R)-4'-phosphopantetheine + ATP + H(+) = 3'-dephospho-CoA + diphosphate. Its pathway is cofactor biosynthesis; coenzyme A biosynthesis; CoA from (R)-pantothenate: step 4/5. In terms of biological role, reversibly transfers an adenylyl group from ATP to 4'-phosphopantetheine, yielding dephospho-CoA (dPCoA) and pyrophosphate. In Synechococcus sp. (strain JA-3-3Ab) (Cyanobacteria bacterium Yellowstone A-Prime), this protein is Phosphopantetheine adenylyltransferase.